A 203-amino-acid polypeptide reads, in one-letter code: Urease accessory protein UreE (203 aa).

Residues 170–190 (EHHGHSHSRSHDHDHDHDHQH) show a composition bias toward basic and acidic residues. Residues 170 to 203 (EHHGHSHSRSHDHDHDHDHQHGPSCSHGHHHGHR) are disordered.

The protein belongs to the UreE family.

It localises to the cytoplasm. Involved in urease metallocenter assembly. Binds nickel. Probably functions as a nickel donor during metallocenter assembly. This chain is Urease accessory protein UreE, found in Burkholderia pseudomallei (strain 1710b).